The sequence spans 69 residues: Conopeptide Y-Fe1 (69 aa).

An N-terminal signal peptide occupies residues 1 to 20; that stretch reads MSKLGVVLFVFLLLLPLAAP. Residues 21–69 constitute a propeptide that is removed on maturation; the sequence is QPVGDQPADQPADRNAEARGTYLYPFSYYRLWRYFTRFLHKQPYYYVHI.

Belongs to the conotoxin M superfamily. Conopeptide Y family. As to expression, expressed by the venom duct.

The protein localises to the secreted. Tyrosine-rich conopeptide that specifically targets voltage-gated potassium channel Kv1.6/KCNA6 (IC(50) is 8.8 uM) that is expressed in Xenopus oocytes. In vivo, causes seizures (at 5 nmol) and death (20 nmol) when intracranially injected into mice, and causes paralysis (at 10 pmol) to C.elegans. This is Conopeptide Y-Fe1 from Conus ferrugineus (Cone snail).